Here is an 86-residue protein sequence, read N- to C-terminus: Large ribosomal subunit protein bL31 (86 aa).

The segment at 65 to 86 (YGMGSADSATSKETKESKKSDK) is disordered. The segment covering 74-86 (TSKETKESKKSDK) has biased composition (basic and acidic residues).

The protein belongs to the bacterial ribosomal protein bL31 family. Type A subfamily. As to quaternary structure, part of the 50S ribosomal subunit.

Binds the 23S rRNA. The chain is Large ribosomal subunit protein bL31 from Prochlorococcus marinus subsp. pastoris (strain CCMP1986 / NIES-2087 / MED4).